The primary structure comprises 216 residues: uncharacterized protein (216 aa).

Residues 125-176 (YPKSTNFDSHYHDCDEYWVIIEGAGTVVVGSRSFEVEVGDCVAIGMGHHHDL) form the Cupin type-2 domain.

This is an uncharacterized protein from Sinorhizobium fredii (strain NBRC 101917 / NGR234).